We begin with the raw amino-acid sequence, 452 residues long: Molybdate-anion transporter (452 aa).

The next 12 helical transmembrane spans lie at 1–21 (MLLTAYFVLVGLIALWAVLEF), 45–65 (YDFYRTYFPALAADWLQGPYL), 79–99 (IAIIYVCGFGASVFAGLVSAP), 130–150 (FVLITGRVLGGFSSSLLFSSF), 180–200 (NGGIAIAAGVIANACAEWLGL), 201–221 (GPASPSVLAVPLLVLSVALVI), 251–271 (VLLLGTIQALFESVVYIFIFL), 281–301 (TPLGIAFSSFMAASAAGSSLY), 316–336 (VLCLSILMVFFSLFMLTFSTA), 346–366 (LLAFLLIELACGLYFPAMGFL), 377–397 (IGVLNWFRVPLNLLAGLGLLV), and 410–430 (MFSLCAITMLLALLCVVSLFT).

This sequence belongs to the major facilitator superfamily.

Its subcellular location is the cell membrane. In terms of biological role, mediates high-affinity intracellular uptake of the rare oligo-element molybdenum. In Xenopus tropicalis (Western clawed frog), this protein is Molybdate-anion transporter (mfsd5).